We begin with the raw amino-acid sequence, 255 residues long: uncharacterized protein (255 aa).

Positions 253–255 (SKI) match the Microbody targeting signal motif.

The protein belongs to the enoyl-CoA hydratase/isomerase family.

Its subcellular location is the peroxisome. This is an uncharacterized protein from Caenorhabditis elegans.